Here is a 665-residue protein sequence, read N- to C-terminus: Fructose-1,6-bisphosphatase class 3 (665 aa).

It belongs to the FBPase class 3 family. It depends on Mn(2+) as a cofactor.

It catalyses the reaction beta-D-fructose 1,6-bisphosphate + H2O = beta-D-fructose 6-phosphate + phosphate. It functions in the pathway carbohydrate biosynthesis; gluconeogenesis. This is Fructose-1,6-bisphosphatase class 3 from Clostridium novyi (strain NT).